Consider the following 51-residue polypeptide: Large ribosomal subunit protein eL39 (51 aa).

The interval 1 to 22 is disordered; it reads MAAQKSFRIKQKMAKAKKQNRP. Positions 7-20 are enriched in basic residues; the sequence is FRIKQKMAKAKKQN.

Belongs to the eukaryotic ribosomal protein eL39 family. As to quaternary structure, component of the large ribosomal subunit (LSU). Mature yeast ribosomes consist of a small (40S) and a large (60S) subunit. The 40S small subunit contains 1 molecule of ribosomal RNA (18S rRNA) and 33 different proteins (encoded by 57 genes). The large 60S subunit contains 3 rRNA molecules (25S, 5.8S and 5S rRNA) and 46 different proteins (encoded by 81 genes). eL39 interacts with YIH1.

Its subcellular location is the cytoplasm. In terms of biological role, component of the ribosome, a large ribonucleoprotein complex responsible for the synthesis of proteins in the cell. The small ribosomal subunit (SSU) binds messenger RNAs (mRNAs) and translates the encoded message by selecting cognate aminoacyl-transfer RNA (tRNA) molecules. The large subunit (LSU) contains the ribosomal catalytic site termed the peptidyl transferase center (PTC), which catalyzes the formation of peptide bonds, thereby polymerizing the amino acids delivered by tRNAs into a polypeptide chain. The nascent polypeptides leave the ribosome through a tunnel in the LSU and interact with protein factors that function in enzymatic processing, targeting, and the membrane insertion of nascent chains at the exit of the ribosomal tunnel. The chain is Large ribosomal subunit protein eL39 from Saccharomyces cerevisiae (strain ATCC 204508 / S288c) (Baker's yeast).